Here is a 332-residue protein sequence, read N- to C-terminus: Protein pelota homolog (332 aa).

This sequence belongs to the eukaryotic release factor 1 family. Pelota subfamily. Monomer. It depends on a divalent metal cation as a cofactor.

The protein localises to the cytoplasm. Functionally, may function in recognizing stalled ribosomes, interact with stem-loop structures in stalled mRNA molecules, and effect endonucleolytic cleavage of the mRNA. May play a role in the release non-functional ribosomes and degradation of damaged mRNAs. Has endoribonuclease activity. This chain is Protein pelota homolog, found in Pyrobaculum calidifontis (strain DSM 21063 / JCM 11548 / VA1).